The following is a 491-amino-acid chain: Putative ABC transporter ATP-binding protein TDE_0906 (491 aa).

2 consecutive ABC transporter domains span residues 2–241 and 267–491; these read INLN…KQGL and LTLH…KERL. Residues 36 to 43 and 300 to 307 contribute to the ATP site; these read GKSGCGKT and GKNGCGKT.

It belongs to the ABC transporter superfamily.

It localises to the cell inner membrane. In terms of biological role, probably part of an ABC transporter complex. Responsible for energy coupling to the transport system. The protein is Putative ABC transporter ATP-binding protein TDE_0906 of Treponema denticola (strain ATCC 35405 / DSM 14222 / CIP 103919 / JCM 8153 / KCTC 15104).